Here is a 566-residue protein sequence, read N- to C-terminus: Arginine--tRNA ligase (566 aa).

A 'HIGH' region motif is present at residues 121-131 (ANPNGPFHIGH).

This sequence belongs to the class-I aminoacyl-tRNA synthetase family.

It is found in the cytoplasm. The enzyme catalyses tRNA(Arg) + L-arginine + ATP = L-arginyl-tRNA(Arg) + AMP + diphosphate. This chain is Arginine--tRNA ligase, found in Methanococcus maripaludis (strain DSM 14266 / JCM 13030 / NBRC 101832 / S2 / LL).